Reading from the N-terminus, the 33-residue chain is Mu-theraphotoxin-Ssp1a (33 aa).

3 cysteine pairs are disulfide-bonded: C2/C17, C9/C22, and C16/C29. L33 is modified (leucine amide).

This sequence belongs to the neurotoxin 10 (Hwtx-1) family. 22 (Htx-4) subfamily. In terms of tissue distribution, expressed by the venom gland.

The protein localises to the secreted. In terms of biological role, gating modifier toxin that traps voltage-sensing domain II of voltage-gated sodium channels in the resting state without significantly altering the voltage-dependence of activation and inactivation, or delay in recovery from inactivation. Inhibits hNav1.7/SCN9A (IC(50)=134 nM), followed in rank order of potency by Nav1.6/SCN8A (IC(50)=191 nM), Nav1.2/SCN2A (IC(50)=239 nM), Nav1.3/SCN3A (IC(50)=547 nM) and Nav1.1/SCN1A (IC(50)=674 nM). Its binding to Nav1.2, Nav1.3 and Nav1.7 is slowly reversible and incomplete, with ~25% of Nav1.2, ~50% of Nav1.3 and ~40% of Nav1.7 channels recovering from block after a 30 minutes washout, respectively. Binds in the aqueous cleft formed between the S1-S2 and S3-S4 loops of each channel subtype, primarily targeting the S3-S4 loop. The chain is Mu-theraphotoxin-Ssp1a from Selenotypus sp. (Feather-legged tarantula).